The sequence spans 174 residues: Tat proofreading chaperone TtrD (174 aa).

It belongs to the TorD/DmsD family. As to quaternary structure, monomer.

The protein resides in the cytoplasm. Functionally, binds specifically to the Tat signal peptide of the TtrA subunit of the tetrathionate reductase. This is Tat proofreading chaperone TtrD (ttrD) from Archaeoglobus fulgidus (strain ATCC 49558 / DSM 4304 / JCM 9628 / NBRC 100126 / VC-16).